Consider the following 347-residue polypeptide: Melanoma-associated antigen B1 (347 aa).

Over residues 1–17 the composition is skewed to basic residues; it reads MPRGQKSKLRAREKRRK. The disordered stretch occupies residues 1-104; it reads MPRGQKSKLR…QATTSTESSV (104 aa). Composition is skewed to polar residues over residues 39–53 and 89–102; these read PSSSPVLGDTPTSSP and ENASFSQATTSTES. Positions 108 to 307 constitute an MAGE domain; the sequence is VAWEAGMLMH…RDFPSHYEEA (200 aa). Positions 315 to 347 are disordered; the sequence is AQVRSSVRARRRTTATTFRARSRAPFSRSSHPM. Positions 328–347 are enriched in low complexity; it reads TATTFRARSRAPFSRSSHPM.

As to expression, expressed only in testis.

This chain is Melanoma-associated antigen B1 (MAGEB1), found in Homo sapiens (Human).